The primary structure comprises 58 residues: Large ribosomal subunit protein bL32 (58 aa).

Positions 1-20 (MALPKHKKSKSKRDKRRTHQ) are enriched in basic residues. The disordered stretch occupies residues 1–26 (MALPKHKKSKSKRDKRRTHQKLTAPN).

It belongs to the bacterial ribosomal protein bL32 family.

In Desulfatibacillum aliphaticivorans, this protein is Large ribosomal subunit protein bL32.